The chain runs to 413 residues: Synaptosomal-associated protein 47 (413 aa).

A t-SNARE coiled-coil homology 1 domain is found at alanine 109–leucine 171. The disordered stretch occupies residues arginine 321–glutamate 342. The 63-residue stretch at lysine 350–leucine 412 folds into the t-SNARE coiled-coil homology 2 domain.

This sequence belongs to the SVAP1 family. In terms of assembly, associates with the BLOC-1 complex. Interacts with BLOC1S6. Forms a complex containing SNAP47, VAMP2 and STX1A. Ubiquitously expressed with the most abundant expression in the brain. In brain, most highly expressed in the glomerular layer of the olfactory bulb, the cortex, striatum, hippocampus, and colliculi (at protein level).

The protein localises to the endomembrane system. It is found in the cytoplasm. Its subcellular location is the perinuclear region. Its function is as follows. May play a role in intracellular membrane fusion. This Mus musculus (Mouse) protein is Synaptosomal-associated protein 47 (Snap47).